The sequence spans 442 residues: Histidinol dehydrogenase (442 aa).

NAD(+) contacts are provided by Tyr142, Gln204, and Asn227. 3 residues coordinate substrate: Ser250, Gln272, and His275. Positions 272 and 275 each coordinate Zn(2+). Active-site proton acceptor residues include Glu340 and His341. His341, Asp374, Glu428, and His433 together coordinate substrate. Asp374 is a Zn(2+) binding site. His433 provides a ligand contact to Zn(2+).

Belongs to the histidinol dehydrogenase family. It depends on Zn(2+) as a cofactor.

It catalyses the reaction L-histidinol + 2 NAD(+) + H2O = L-histidine + 2 NADH + 3 H(+). It participates in amino-acid biosynthesis; L-histidine biosynthesis; L-histidine from 5-phospho-alpha-D-ribose 1-diphosphate: step 9/9. Its function is as follows. Catalyzes the sequential NAD-dependent oxidations of L-histidinol to L-histidinaldehyde and then to L-histidine. The polypeptide is Histidinol dehydrogenase (Prochlorococcus marinus (strain MIT 9313)).